The sequence spans 313 residues: Olfactory receptor 10P1 (313 aa).

At 1-25 the chain is on the extracellular side; sequence MAGENHTTLPEFLLLGFSDLKALQG. N-linked (GlcNAc...) asparagine glycosylation is present at asparagine 5. The helical transmembrane segment at 26–46 threads the bilayer; it reads PLFWVVLLVYLVTLLGNSLII. Over 47-54 the chain is Cytoplasmic; it reads LLTQVSPA. A helical membrane pass occupies residues 55–75; that stretch reads LHSPMYFFLRQLSVVELFYTT. Topologically, residues 76–100 are extracellular; the sequence is DIVPRTLANLGSPHPQAISFQGCAA. Residues 101-121 traverse the membrane as a helical segment; sequence QMYVFIVLGISECCLLTAMAY. Residues 122–140 are Cytoplasmic-facing; that stretch reads DRYVAICQPLRYSTLLSPR. A helical transmembrane segment spans residues 141–161; that stretch reads ACMAMVGTSWLTGIITATTHA. Topologically, residues 162–198 are extracellular; it reads SLIFSLPFRSHPIIPHFLCDILPVLRLASAGKHRSEI. Residues 199-218 form a helical membrane-spanning segment; that stretch reads SVMTATIVFIMIPFSLIVTS. At 219–238 the chain is on the cytoplasmic side; the sequence is YIRILGAILAMASTQSRRKV. A helical transmembrane segment spans residues 239 to 259; that stretch reads FSTCSSHLLVVSLFFGTASIT. The Extracellular segment spans residues 260 to 272; that stretch reads YIRPQAGSSVTTD. Residues 273–293 form a helical membrane-spanning segment; sequence RVLSLFYTVITPMLNPIIYTL. The Cytoplasmic portion of the chain corresponds to 294–313; the sequence is RNKDVRRALRHLVKRQRPSP.

This sequence belongs to the G-protein coupled receptor 1 family.

The protein resides in the cell membrane. Its function is as follows. Odorant receptor. The sequence is that of Olfactory receptor 10P1 (OR10P1) from Homo sapiens (Human).